The chain runs to 735 residues: Photosystem I P700 chlorophyll a apoprotein A2 (735 aa).

The next 8 membrane-spanning stretches (helical) occupy residues 46 to 69 (IFASHFGQIALIFLWASGNLFYVS), 135 to 158 (LSTASMFLLILSVLFLIAGFIHGY), 176 to 200 (LNHHLSALFGVSSLAWTGHLIHVAI), 274 to 292 (IAHHHLAIAVLFIVAGHMY), 329 to 352 (LNLQLALALAAVGTICSLVAQHMY), 368 to 394 (AALYTHHQYIAGFIMCGAFAHGTIFLV), 416 to 438 (VIISHLSWVCLFLGFHTLGLYVH), and 521 to 539 (FLVHHAIALGLHTTTLILV). [4Fe-4S] cluster-binding residues include C563 and C572. 2 helical membrane passes run 579-600 (AFYLAIFWMLNTIGWVTFYWHW) and 647-669 (LSVWSWMFLFGHLIYATGFMFLI). Chlorophyll a-binding residues include H658, M666, and Y674. A phylloquinone-binding site is contributed by W675. Residues 708–728 (FVGLIHFTVGYILTYAAFLIA) traverse the membrane as a helical segment.

This sequence belongs to the PsaA/PsaB family. In terms of assembly, the PsaA/B heterodimer binds the P700 chlorophyll special pair and subsequent electron acceptors. PSI consists of a core antenna complex that captures photons, and an electron transfer chain that converts photonic excitation into a charge separation. The eukaryotic PSI reaction center is composed of at least 11 subunits. P700 is a chlorophyll a/chlorophyll a' dimer, A0 is one or more chlorophyll a, A1 is one or both phylloquinones and FX is a shared 4Fe-4S iron-sulfur center. serves as cofactor.

The protein resides in the plastid. The protein localises to the chloroplast thylakoid membrane. The catalysed reaction is reduced [plastocyanin] + hnu + oxidized [2Fe-2S]-[ferredoxin] = oxidized [plastocyanin] + reduced [2Fe-2S]-[ferredoxin]. In terms of biological role, psaA and PsaB bind P700, the primary electron donor of photosystem I (PSI), as well as the electron acceptors A0, A1 and FX. PSI is a plastocyanin/cytochrome c6-ferredoxin oxidoreductase, converting photonic excitation into a charge separation, which transfers an electron from the donor P700 chlorophyll pair to the spectroscopically characterized acceptors A0, A1, FX, FA and FB in turn. Oxidized P700 is reduced on the lumenal side of the thylakoid membrane by plastocyanin or cytochrome c6. The protein is Photosystem I P700 chlorophyll a apoprotein A2 of Bigelowiella natans (Pedinomonas minutissima).